The sequence spans 1091 residues: Rho GTPase-activating protein 7 (1091 aa).

One can recognise an SAM domain in the interval 11–78 (LTQIEAKEAC…LNKCAVMKLE (68 aa)). S86, S89, and S320 each carry phosphoserine. Residues 273–447 (QLNCVEISAL…RLSIYDNVPG (175 aa)) are focal adhesion-targeting (FAT). Disordered regions lie at residues 292–327 (VRKRSVSNSTQTSSSSSQSETSSAVSTPSPVTRTRS), 382–439 (PKAL…SSRL), and 491–553 (SDEG…GVGA). Low complexity-rich tracts occupy residues 297 to 323 (VSNSTQTSSSSSQSETSSAVSTPSPVT) and 386 to 400 (SNGSFPPSGNNSSVN). Residues 414 to 425 (LRRENSSDSPKE) show a composition bias toward basic and acidic residues. Over residues 499–511 (ALDSVSPCPSSPK) the composition is skewed to polar residues. Positions 513 to 523 (IHLDVDNDRAT) are enriched in basic and acidic residues. Positions 526 to 535 (DLDSTGNSLN) are enriched in polar residues. The interval 614-636 (KHGFSWAVPKFMKRIKVPDYKDR) is polybasic cluster (PBR). The 207-residue stretch at 641–847 (VPLTVNVQRT…HMIAECKKLF (207 aa)) folds into the Rho-GAP domain. The START domain occupies 877–1084 (RNDESADYQH…RDSFSNQNTE (208 aa)).

In terms of assembly, interacts with EF1A1, facilitates EF1A1 distribution to the membrane periphery and ruffles upon growth factor stimulation and suppresses cell migration. Interacts with tensin TNS1 (via N-terminus); the interaction is decreased by phosphorylation of TNS1. Interacts with TNS3 and PTEN; in resting cells, interacts with TNS3 (via C2 tensin-type domain) but, following growth factor stimulation, TNS3 and PTEN are phosphorylated which leads to weakened interaction with TNS3 and enhanced interaction with PTEN. Interacts (via C-terminus) with tensin TNS4 (via SH2 domain); the interaction is independent of tyrosine phosphorylation of DLC1.

It is found in the cytoplasm. It localises to the cell junction. Its subcellular location is the focal adhesion. The protein resides in the membrane. Functions as a GTPase-activating protein for the small GTPases RHOA, RHOB, RHOC and CDC42, terminating their downstream signaling. This induces morphological changes and detachment through cytoskeletal reorganization, playing a critical role in biological processes such as cell migration and proliferation. Also functions in vivo as an activator of the phospholipase PLCD1. Active DLC1 increases cell migration velocity but reduces directionality. Required for growth factor-induced epithelial cell migration; in resting cells, interacts with TNS3 while PTEN interacts with the p85 regulatory subunit of the PI3K kinase complex but growth factor stimulation induces phosphorylation of TNS3 and PTEN, causing them to change their binding preference so that PTEN interacts with DLC1 and TNS3 interacts with p85. The PTEN-DLC1 complex translocates to the posterior of migrating cells to activate RHOA while the TNS3-p85 complex translocates to the leading edge of migrating cells to promote RAC1 activation. The sequence is that of Rho GTPase-activating protein 7 (DLC1) from Canis lupus familiaris (Dog).